Here is a 200-residue protein sequence, read N- to C-terminus: Molybdenum cofactor guanylyltransferase (200 aa).

Residues 10–12 (LAG), Lys-23, Asn-51, Asp-69, and Asp-99 contribute to the GTP site. Residue Asp-99 participates in Mg(2+) binding.

This sequence belongs to the MobA family. In terms of assembly, monomer. The cofactor is Mg(2+).

It localises to the cytoplasm. It catalyses the reaction Mo-molybdopterin + GTP + H(+) = Mo-molybdopterin guanine dinucleotide + diphosphate. In terms of biological role, transfers a GMP moiety from GTP to Mo-molybdopterin (Mo-MPT) cofactor (Moco or molybdenum cofactor) to form Mo-molybdopterin guanine dinucleotide (Mo-MGD) cofactor. This Shewanella pealeana (strain ATCC 700345 / ANG-SQ1) protein is Molybdenum cofactor guanylyltransferase.